The chain runs to 133 residues: Small ribosomal subunit protein uS8 (133 aa).

A disordered region spans residues 1–28 (MANHDPISDMLTRIRNASEKRHEKTKVP). The span at 16–26 (NASEKRHEKTK) shows a compositional bias: basic and acidic residues.

The protein belongs to the universal ribosomal protein uS8 family. Part of the 30S ribosomal subunit. Contacts proteins S5 and S12.

In terms of biological role, one of the primary rRNA binding proteins, it binds directly to 16S rRNA central domain where it helps coordinate assembly of the platform of the 30S subunit. This chain is Small ribosomal subunit protein uS8, found in Prochlorococcus marinus (strain NATL1A).